Reading from the N-terminus, the 103-residue chain is Histone H4 (103 aa).

Residues 1–14 show a composition bias toward gly residues; it reads MSGRGKGGKGLGKG. The interval 1-20 is disordered; sequence MSGRGKGGKGLGKGGAKRHR. N-acetylserine is present on serine 2. The residue at position 17 (lysine 17) is an N6-acetyllysine. A DNA-binding region spans residues 17 to 21; sequence KRHRK. The residue at position 21 (lysine 21) is an N6-methyllysine.

The protein belongs to the histone H4 family. As to quaternary structure, the nucleosome is a histone octamer containing two molecules each of H2A, H2B, H3 and H4 assembled in one H3-H4 heterotetramer and two H2A-H2B heterodimers. The octamer wraps approximately 147 bp of DNA.

Its subcellular location is the nucleus. It is found in the chromosome. Core component of nucleosome. Nucleosomes wrap and compact DNA into chromatin, limiting DNA accessibility to the cellular machineries which require DNA as a template. Histones thereby play a central role in transcription regulation, DNA repair, DNA replication and chromosomal stability. DNA accessibility is regulated via a complex set of post-translational modifications of histones, also called histone code, and nucleosome remodeling. The polypeptide is Histone H4 (Capsicum annuum (Capsicum pepper)).